Reading from the N-terminus, the 449-residue chain is Phosphoglucosamine mutase (449 aa).

The Phosphoserine intermediate role is filled by Ser99. Residues Ser99, Asp239, Asp241, and Asp243 each coordinate Mg(2+). The residue at position 99 (Ser99) is a Phosphoserine.

It belongs to the phosphohexose mutase family. Requires Mg(2+) as cofactor. In terms of processing, activated by phosphorylation.

It carries out the reaction alpha-D-glucosamine 1-phosphate = D-glucosamine 6-phosphate. Functionally, catalyzes the conversion of glucosamine-6-phosphate to glucosamine-1-phosphate. The sequence is that of Phosphoglucosamine mutase from Finegoldia magna (strain ATCC 29328 / DSM 20472 / WAL 2508) (Peptostreptococcus magnus).